The sequence spans 144 residues: MKIQIINKSRHDLPNYETIASAGMDLRANIIEPITLKPLERTIVKTGLFIELPIGYEAQVRPRSGLAAKKGVTVLNSPGTVDADYRGEIGVILVNLSNEEFVIENGERIAQLIIAKHERAEWIEVEELSETSRGEGGFGSTGVK.

Substrate is bound by residues 63–65, Asn76, and 80–82; these read RSG and TVD.

Belongs to the dUTPase family. The cofactor is Mg(2+).

It carries out the reaction dUTP + H2O = dUMP + diphosphate + H(+). It participates in pyrimidine metabolism; dUMP biosynthesis; dUMP from dCTP (dUTP route): step 2/2. This enzyme is involved in nucleotide metabolism: it produces dUMP, the immediate precursor of thymidine nucleotides and it decreases the intracellular concentration of dUTP so that uracil cannot be incorporated into DNA. The protein is Deoxyuridine 5'-triphosphate nucleotidohydrolase of Flavobacterium johnsoniae (strain ATCC 17061 / DSM 2064 / JCM 8514 / BCRC 14874 / CCUG 350202 / NBRC 14942 / NCIMB 11054 / UW101) (Cytophaga johnsonae).